Consider the following 574-residue polypeptide: Sulfite reductase [NADPH] hemoprotein beta-component (574 aa).

The [4Fe-4S] cluster site is built by Cys439, Cys445, Cys484, and Cys488. A siroheme-binding site is contributed by Cys488.

Belongs to the nitrite and sulfite reductase 4Fe-4S domain family. In terms of assembly, alpha(8)-beta(8). The alpha component is a flavoprotein, the beta component is a hemoprotein. Siroheme serves as cofactor. Requires [4Fe-4S] cluster as cofactor.

The catalysed reaction is hydrogen sulfide + 3 NADP(+) + 3 H2O = sulfite + 3 NADPH + 4 H(+). It participates in sulfur metabolism; hydrogen sulfide biosynthesis; hydrogen sulfide from sulfite (NADPH route): step 1/1. In terms of biological role, component of the sulfite reductase complex that catalyzes the 6-electron reduction of sulfite to sulfide. This is one of several activities required for the biosynthesis of L-cysteine from sulfate. The sequence is that of Sulfite reductase [NADPH] hemoprotein beta-component from Paenibacillus sp. (strain JDR-2).